The following is a 67-amino-acid chain: Large ribosomal subunit protein uL29 (67 aa).

It belongs to the universal ribosomal protein uL29 family.

The polypeptide is Large ribosomal subunit protein uL29 (Sphingopyxis alaskensis (strain DSM 13593 / LMG 18877 / RB2256) (Sphingomonas alaskensis)).